A 1464-amino-acid chain; its full sequence is Collagen alpha-1(I) chain (1464 aa).

Residues Met1 to Gly22 form the signal peptide. The propeptide at Gln23–Pro161 is N-terminal propeptide. In terms of domain architecture, VWFC spans Ile38–Pro96. A disordered region spans residues Gly98 to Arg1214. Positions Pro138–Pro153 are enriched in pro residues. Gln162 carries the pyrrolidone carboxylic acid modification. The segment at Gln162 to Pro178 is nonhelical region (N-terminal). Lys170 carries the post-translational modification Allysine. Ser171 carries the phosphoserine modification. Residues Gly179–Pro1192 are triple-helical region. Residues Pro190, Pro193, Pro196, Pro205, Pro208, Pro211, Pro226, Pro241, Pro247, Pro256, and Pro262 each carry the 4-hydroxyproline modification. Residues Pro198–Met217 are compositionally biased toward low complexity. Residues Asn229–Glu243 show a composition bias toward basic and acidic residues. The residue at position 265 (Lys265) is a 5-hydroxylysine; alternate. A glycan (O-linked (Gal...) hydroxylysine; alternate) is linked at Lys265. Residue Ser271 is modified to Phosphoserine. Residues Asp279 to Asn295 show a composition bias toward low complexity. Pro289, Pro292, Pro298, Pro307, and Pro313 each carry 4-hydroxyproline. The span at Pro318–Ala331 shows a compositional bias: low complexity. Residues Pro333–Phe345 show a composition bias toward pro residues. 4-hydroxyproline is present on residues Pro334, Pro343, Pro346, Pro373, Pro376, Pro388, Pro394, Pro403, Pro409, Pro412, and Pro427. The segment covering Ala379–Ser418 has biased composition (low complexity). Position 430 is a 5-hydroxylysine (Lys430). 4-hydroxyproline is present on residues Pro436, Pro439, Pro451, Pro460, Pro475, Pro481, Pro490, and Pro496. Over residues Lys448 to Gln457 the composition is skewed to low complexity. Gly residues predominate over residues Gly485–Gly494. 5-hydroxylysine is present on Lys505. 4-hydroxyproline is present on residues Pro514, Pro523, Pro529, Pro535, Pro544, Pro547, Pro556, Pro565, Pro571, Pro583, Pro592, Pro601, Pro604, Pro622, Pro640, Pro646, Pro652, Pro658, Pro664, Pro670, Pro682, Pro691, Pro703, Pro715, Pro718, Pro724, Pro730, and Pro739. Over residues Lys538–Arg564 the composition is skewed to low complexity. The span at Ala573–Pro592 shows a compositional bias: low complexity. Low complexity predominate over residues Gln634–Gln661. A compositionally biased stretch (low complexity) spans Pro696–Pro724. The Cell attachment site signature appears at Arg745–Asp747. 5-hydroxylysine is present on Lys751. 4-hydroxyproline occurs at positions 757, 772, and 778. Over residues Ser784–Ala798 the composition is skewed to low complexity. Phosphoserine is present on Ser787. 4-hydroxyproline occurs at positions 799, 805, 808, 817, 823, 841, 850, and 859. A compositionally biased stretch (low complexity) spans Ala811–Ala838. Positions Pro840–Pro852 are enriched in pro residues. Positions Ile853 to Val883 are enriched in low complexity. Lys862 carries the post-translational modification 5-hydroxylysine. Pro871 and Pro877 each carry 4-hydroxyproline. A 3-hydroxyproline modification is found at Pro885. Residues Pro886, Pro895, Pro898, Pro919, Pro928, Pro937, Pro946, Pro964, Pro973, Pro976, Pro982, Pro997, Pro1003, Pro1009, Pro1018, and Pro1024 each carry the 4-hydroxyproline modification. Positions Glu912–Glu921 are enriched in low complexity. Positions Ala931–Ala955 are enriched in low complexity. The segment covering Pro996–Ala1006 has biased composition (pro residues). Position 1033 is a 5-hydroxylysine (Lys1033). Pro residues predominate over residues Ala1042–Val1057. A 4-hydroxyproline mark is found at Pro1045, Pro1048, and Pro1051. The segment covering Val1078–Pro1092 has biased composition (low complexity). Residues Arg1093–Asp1095 carry the Cell attachment site motif. Basic and acidic residues predominate over residues Arg1093–Ile1107. 5-hydroxylysine is present on Lys1096. Lys1108 is subject to 5-hydroxylysine; alternate. Lys1108 carries an O-linked (Gal...) hydroxylysine; alternate glycan. Residues Pro1120, Pro1123, Pro1126, Pro1144, and Pro1159 each carry the 4-hydroxyproline modification. Residues Pro1126 to Pro1159 show a composition bias toward low complexity. Residue Pro1164 is modified to 3-hydroxyproline. At Pro1165 the chain carries 4-hydroxyproline. Residues Val1177–Pro1192 are compositionally biased toward pro residues. The residue at position 1179 (Pro1179) is a 3-hydroxyproline. Pro1180 is subject to 4-hydroxyproline. Pro1182 carries the post-translational modification 3-hydroxyproline. Pro1183 carries the post-translational modification 4-hydroxyproline. At Pro1185 the chain carries 3-hydroxyproline. 4-hydroxyproline occurs at positions 1186, 1189, and 1192. The interval Ser1193 to Ala1218 is nonhelical region (C-terminal). Position 1208 is an allysine (Lys1208). A propeptide spans Asp1219–Leu1464 (C-terminal propeptide). The region spanning Leu1229–Leu1464 is the Fibrillar collagen NC1 domain. 3 disulfides stabilise this stretch: Cys1259-Cys1291, Cys1299-Cys1462, and Cys1370-Cys1415. Ca(2+) contacts are provided by Asp1277, Asn1279, Gln1280, Cys1282, and Asp1285. The N-linked (GlcNAc...) asparagine glycan is linked to Asn1365.

The protein belongs to the fibrillar collagen family. In terms of assembly, trimers of one alpha 2(I) and two alpha 1(I) chains. Interacts with MRC2. Interacts with TRAM2. Interacts with MFAP4 in a Ca (2+)-dependent manner. In terms of processing, contains mostly 4-hydroxyproline. Proline residues at the third position of the tripeptide repeating unit (G-X-Y) are hydroxylated in some or all of the chains. Contains 3-hydroxyproline at a few sites. This modification occurs on the first proline residue in the sequence motif Gly-Pro-Hyp, where Hyp is 4-hydroxyproline. Post-translationally, lysine residues at the third position of the tripeptide repeating unit (G-X-Y) are 5-hydroxylated in some or all of the chains. In terms of processing, O-glycosylated on hydroxylated lysine residues. The O-linked glycan consists of a Glc-Gal disaccharide. As to expression, forms the fibrils of tendon, ligaments and bones. In bones the fibrils are mineralized with calcium hydroxyapatite.

The protein localises to the secreted. The protein resides in the extracellular space. It is found in the extracellular matrix. Functionally, type I collagen is a member of group I collagen (fibrillar forming collagen). The sequence is that of Collagen alpha-1(I) chain (COL1A1) from Homo sapiens (Human).